Consider the following 217-residue polypeptide: Harpin secretion protein HrcR (217 aa).

The next 4 helical transmembrane spans lie at 11 to 31, 52 to 72, 158 to 178, and 185 to 205; these read FALFLGALSLIPMLMIVCTCF, PNMALYGIALAATLFVMAPVF, IGFLIYIPFIVIDLIVSNVLL, and VAPMTLSLPLKMLLFVLINGW.

Belongs to the FliP/MopC/SpaP family.

Its subcellular location is the cell membrane. Required for the secretion of harpin. This chain is Harpin secretion protein HrcR (hrcR), found in Erwinia amylovora (Fire blight bacteria).